The sequence spans 286 residues: ATP synthase gamma chain (286 aa).

The protein belongs to the ATPase gamma chain family. In terms of assembly, F-type ATPases have 2 components, CF(1) - the catalytic core - and CF(0) - the membrane proton channel. CF(1) has five subunits: alpha(3), beta(3), gamma(1), delta(1), epsilon(1). CF(0) has three main subunits: a, b and c.

The protein resides in the cell inner membrane. In terms of biological role, produces ATP from ADP in the presence of a proton gradient across the membrane. The gamma chain is believed to be important in regulating ATPase activity and the flow of protons through the CF(0) complex. This chain is ATP synthase gamma chain, found in Shewanella sediminis (strain HAW-EB3).